The chain runs to 371 residues: Maltose/maltodextrin import ATP-binding protein MalK (371 aa).

Residues 4–234 enclose the ABC transporter domain; that stretch reads VTLKNVCKAY…PENRFVAGFI (231 aa). Position 36-43 (36-43) interacts with ATP; it reads GPSGCGKS.

Belongs to the ABC transporter superfamily. Maltooligosaccharide importer (TC 3.A.1.1.1) family. As to quaternary structure, the complex is composed of two ATP-binding proteins (MalK), two transmembrane proteins (MalG and MalK) and a solute-binding protein (MalE).

It is found in the cell inner membrane. It catalyses the reaction D-maltose(out) + ATP + H2O = D-maltose(in) + ADP + phosphate + H(+). Part of the ABC transporter complex MalEFGK involved in maltose/maltodextrin import. Responsible for energy coupling to the transport system. The chain is Maltose/maltodextrin import ATP-binding protein MalK from Vibrio vulnificus (strain CMCP6).